We begin with the raw amino-acid sequence, 534 residues long: Probable alpha-galactosidase A (534 aa).

An N-terminal signal peptide occupies residues 1-25 (MRLITRWIPLANALASTMPVQVVAS). C47 and C79 form a disulfide bridge. N-linked (GlcNAc...) asparagine glycosylation is found at N50, N88, N94, and N124. Residues C127 and C157 are joined by a disulfide bond. D155 serves as the catalytic Nucleophile. N-linked (GlcNAc...) asparagine glycosylation occurs at N204. D213 (proton donor) is an active-site residue. Residues 413-534 (CSQVIPTGLI…GLPAGVHVAL (122 aa)) enclose the Ricin B-type lectin domain. A disulfide bridge links C430 with C443. N444 is a glycosylation site (N-linked (GlcNAc...) asparagine). Residues C468 and C481 are joined by a disulfide bond.

This sequence belongs to the glycosyl hydrolase 27 family.

The protein resides in the secreted. The enzyme catalyses Hydrolysis of terminal, non-reducing alpha-D-galactose residues in alpha-D-galactosides, including galactose oligosaccharides, galactomannans and galactolipids.. Functionally, hydrolyzes a variety of simple alpha-D-galactoside as well as more complex molecules such as oligosaccharides and polysaccharides. The chain is Probable alpha-galactosidase A (aglA) from Aspergillus flavus (strain ATCC 200026 / FGSC A1120 / IAM 13836 / NRRL 3357 / JCM 12722 / SRRC 167).